Reading from the N-terminus, the 205-residue chain is Methylthioribulose-1-phosphate dehydratase (205 aa).

Positions 95 and 97 each coordinate Zn(2+).

It belongs to the aldolase class II family. MtnB subfamily. The cofactor is Zn(2+).

It catalyses the reaction 5-(methylsulfanyl)-D-ribulose 1-phosphate = 5-methylsulfanyl-2,3-dioxopentyl phosphate + H2O. Its pathway is amino-acid biosynthesis; L-methionine biosynthesis via salvage pathway; L-methionine from S-methyl-5-thio-alpha-D-ribose 1-phosphate: step 2/6. Its function is as follows. Catalyzes the dehydration of methylthioribulose-1-phosphate (MTRu-1-P) into 2,3-diketo-5-methylthiopentyl-1-phosphate (DK-MTP-1-P). This is Methylthioribulose-1-phosphate dehydratase from Microcystis aeruginosa (strain NIES-843 / IAM M-2473).